A 377-amino-acid polypeptide reads, in one-letter code: Spermidine/putrescine import ATP-binding protein PotA (377 aa).

Positions 18–248 constitute an ABC transporter domain; that stretch reads IRLSGISKSF…PKNLFVARFI (231 aa). 50-57 contributes to the ATP binding site; it reads GPSGCGKT.

This sequence belongs to the ABC transporter superfamily. Spermidine/putrescine importer (TC 3.A.1.11.1) family. As to quaternary structure, the complex is composed of two ATP-binding proteins (PotA), two transmembrane proteins (PotB and PotC) and a solute-binding protein (PotD).

It is found in the cell inner membrane. The enzyme catalyses ATP + H2O + polyamine-[polyamine-binding protein]Side 1 = ADP + phosphate + polyamineSide 2 + [polyamine-binding protein]Side 1.. Part of the ABC transporter complex PotABCD involved in spermidine/putrescine import. Responsible for energy coupling to the transport system. This is Spermidine/putrescine import ATP-binding protein PotA from Vibrio parahaemolyticus serotype O3:K6 (strain RIMD 2210633).